A 104-amino-acid chain; its full sequence is Cytochrome c oxidase assembly factor 6 (104 aa).

Residues 1–22 (MGLFSFDGGKKESQPPNTRSQR) are disordered. Residues 22-76 (RKLCWESRDAFFQCLDKADILDAMDPKNSKSIKSHCKVENEKFEENCAHSWIKYF) enclose the CHCH domain. The Cx9C motif signature appears at 25-35 (CWESRDAFFQC). 2 disulfide bridges follow: Cys-25–Cys-68 and Cys-35–Cys-57. The Cx10C motif signature appears at 57–68 (CKVENEKFEENC).

It belongs to the cytochrome c oxidase subunit 6B family. As to quaternary structure, interacts with COX2.

The protein resides in the cytoplasm. Its subcellular location is the nucleus. It is found in the mitochondrion intermembrane space. Functionally, involved in the maturation of the mitochondrial respiratory chain complex IV subunit MT-CO2/COX2. Thereby, may regulate early steps of complex IV assembly. Mitochondrial respiratory chain complex IV or cytochrome c oxidase is the component of the respiratory chain that catalyzes the transfer of electrons from intermembrane space cytochrome c to molecular oxygen in the matrix and as a consequence contributes to the proton gradient involved in mitochondrial ATP synthesis. May also be required for efficient formation of respiratory supercomplexes comprised of complexes III and IV. This Saccharomyces cerevisiae (strain ATCC 204508 / S288c) (Baker's yeast) protein is Cytochrome c oxidase assembly factor 6.